The sequence spans 81 residues: Small ribosomal subunit protein uS17 (81 aa).

It belongs to the universal ribosomal protein uS17 family. As to quaternary structure, part of the 30S ribosomal subunit.

One of the primary rRNA binding proteins, it binds specifically to the 5'-end of 16S ribosomal RNA. The chain is Small ribosomal subunit protein uS17 from Hyphomonas neptunium (strain ATCC 15444).